The primary structure comprises 89 residues: Small ribosomal subunit protein uS14 (89 aa).

The protein belongs to the universal ribosomal protein uS14 family. Part of the 30S ribosomal subunit. Contacts proteins S3 and S10.

Its function is as follows. Binds 16S rRNA, required for the assembly of 30S particles and may also be responsible for determining the conformation of the 16S rRNA at the A site. This Aster yellows witches'-broom phytoplasma (strain AYWB) protein is Small ribosomal subunit protein uS14.